We begin with the raw amino-acid sequence, 78 residues long: Conotoxin 1 (78 aa).

A signal peptide spans 1–22 (MKLTCMMFVAVLFLTASVFITA). Residues 23–51 (DDSRNGIENLPRMRRHEMKNPKASKLNKR) constitute a propeptide that is removed on maturation. At glutamine 52 the chain carries Pyrrolidone carboxylic acid. 3 disulfide bridges follow: cysteine 53/cysteine 69, cysteine 60/cysteine 73, and cysteine 68/cysteine 77.

This sequence belongs to the conotoxin O1 superfamily. In terms of tissue distribution, expressed by the venom duct.

The protein resides in the secreted. This chain is Conotoxin 1, found in Conus imperialis (Imperial cone).